Consider the following 504-residue polypeptide: ATP synthase subunit alpha (504 aa).

Residue 169-176 (GDRQTGKT) coordinates ATP.

The protein belongs to the ATPase alpha/beta chains family. F-type ATPases have 2 components, CF(1) - the catalytic core - and CF(0) - the membrane proton channel. CF(1) has five subunits: alpha(3), beta(3), gamma(1), delta(1), epsilon(1). CF(0) has three main subunits: a(1), b(2) and c(9-12). The alpha and beta chains form an alternating ring which encloses part of the gamma chain. CF(1) is attached to CF(0) by a central stalk formed by the gamma and epsilon chains, while a peripheral stalk is formed by the delta and b chains.

Its subcellular location is the cell membrane. The catalysed reaction is ATP + H2O + 4 H(+)(in) = ADP + phosphate + 5 H(+)(out). Functionally, produces ATP from ADP in the presence of a proton gradient across the membrane. The alpha chain is a regulatory subunit. The polypeptide is ATP synthase subunit alpha (Clostridium botulinum (strain Eklund 17B / Type B)).